The chain runs to 154 residues: MAARLCCQLDPARDVLCLRPVGAESCGRPLSWSPGALPPPSPPSVPADDRAHLSLRGLPACAFSSAGPCALRFTSARRMETTVNAPQSLPTPLHKRTLGLSPRSTTWIEEYIKDCVFKDWEESGEELRLKVFVLGGCRHKLVCSPAPCNFFTSA.

The tract at residues 68–117 is mitochondrial targeting sequence; the sequence is PCALRFTSARRMETTVNAPQSLPTPLHKRTLGLSPRSTTWIEEYIKDCVF.

This sequence belongs to the orthohepadnavirus protein X family. In terms of assembly, may form homodimer. May interact with host CEBPA, CFLAR, CREB1, DDB1, E4F1, HBXIP, HSPD1/HSP60, NFKBIA, POLR2E and SMAD4. Interacts with host SMC5-SMC6 complex and induces its degradation. Interacts with host TRPC4AP; leading to prevent ubiquitination of TRPC4AP. Interacts with host PLSCR1; this interaction promotes ubiquitination and degradation of HBx and impairs HBx-mediated cell proliferation. Post-translationally, a fraction may be phosphorylated in insect cells and HepG2 cells, a human hepatoblastoma cell line. Phosphorylated in vitro by host protein kinase C or mitogen-activated protein kinase. N-acetylated in insect cells.

Its subcellular location is the host cytoplasm. It localises to the host nucleus. It is found in the host mitochondrion. Its function is as follows. Multifunctional protein that plays a role in silencing host antiviral defenses and promoting viral transcription. Does not seem to be essential for HBV infection. May be directly involved in development of cirrhosis and liver cancer (hepatocellular carcinoma). Most of cytosolic activities involve modulation of cytosolic calcium. The effect on apoptosis is controversial depending on the cell types in which the studies have been conducted. May induce apoptosis by localizing in mitochondria and causing loss of mitochondrial membrane potential. May also modulate apoptosis by binding host CFLAR, a key regulator of the death-inducing signaling complex (DISC). Promotes viral transcription by using the host E3 ubiquitin ligase DDB1 to target the SMC5-SMC6 complex to proteasomal degradation. This host complex would otherwise bind to viral episomal DNA, and prevents its transcription. Moderately stimulates transcription of many different viral and cellular transcription elements. Promoters and enhancers stimulated by HBx contain DNA binding sites for NF-kappa-B, AP-1, AP-2, c-EBP, ATF/CREB, or the calcium-activated factor NF-AT. The sequence is that of Protein X from Homo sapiens (Human).